An 880-amino-acid polypeptide reads, in one-letter code: Alanine--tRNA ligase (880 aa).

Residues H569, H573, C671, and H675 each contribute to the Zn(2+) site.

It belongs to the class-II aminoacyl-tRNA synthetase family. Homotetramer. It depends on Zn(2+) as a cofactor.

The protein localises to the cytoplasm. The catalysed reaction is tRNA(Ala) + L-alanine + ATP = L-alanyl-tRNA(Ala) + AMP + diphosphate. Catalyzes the attachment of alanine to tRNA(Ala) in a two-step reaction: alanine is first activated by ATP to form Ala-AMP and then transferred to the acceptor end of tRNA(Ala). Also edits incorrectly charged Ser-tRNA(Ala) and Gly-tRNA(Ala) via its editing domain. The chain is Alanine--tRNA ligase from Buchnera aphidicola subsp. Baizongia pistaciae (strain Bp).